Here is a 248-residue protein sequence, read N- to C-terminus: ATP synthase subunit a, chloroplastic (248 aa).

Transmembrane regions (helical) follow at residues 38 to 58 (QVLI…TIVV), 96 to 116 (VPFI…GALL), 135 to 155 (INTT…AGIS), 200 to 220 (LVVV…VMFL), and 221 to 241 (GLFT…AYIG).

It belongs to the ATPase A chain family. F-type ATPases have 2 components, CF(1) - the catalytic core - and CF(0) - the membrane proton channel. CF(1) has five subunits: alpha(3), beta(3), gamma(1), delta(1), epsilon(1). CF(0) has four main subunits: a, b, b' and c.

The protein localises to the plastid. The protein resides in the chloroplast thylakoid membrane. Key component of the proton channel; it plays a direct role in the translocation of protons across the membrane. The protein is ATP synthase subunit a, chloroplastic of Amborella trichopoda.